We begin with the raw amino-acid sequence, 155 residues long: Ribosomal RNA large subunit methyltransferase H (155 aa).

S-adenosyl-L-methionine contacts are provided by residues Leu-72, Gly-103, and 122–127; that span reads LSDLTL.

The protein belongs to the RNA methyltransferase RlmH family. Homodimer.

It is found in the cytoplasm. The enzyme catalyses pseudouridine(1915) in 23S rRNA + S-adenosyl-L-methionine = N(3)-methylpseudouridine(1915) in 23S rRNA + S-adenosyl-L-homocysteine + H(+). In terms of biological role, specifically methylates the pseudouridine at position 1915 (m3Psi1915) in 23S rRNA. This Verminephrobacter eiseniae (strain EF01-2) protein is Ribosomal RNA large subunit methyltransferase H.